The chain runs to 196 residues: Carnitine operon protein CaiE (196 aa).

The segment at 173-196 is disordered; sequence TQPLRQMEENRPRLQGTTDVTPKR. Positions 187 to 196 are enriched in polar residues; the sequence is QGTTDVTPKR.

Belongs to the transferase hexapeptide repeat family.

It participates in amine and polyamine metabolism; carnitine metabolism. Its function is as follows. Overproduction of CaiE stimulates the activity of CaiB and CaiD. In Escherichia coli O6:K15:H31 (strain 536 / UPEC), this protein is Carnitine operon protein CaiE.